The sequence spans 309 residues: Sulfate adenylyltransferase subunit 2 (309 aa).

The protein belongs to the PAPS reductase family. CysD subfamily. As to quaternary structure, heterodimer composed of CysD, the smaller subunit, and CysN.

It catalyses the reaction sulfate + ATP + H(+) = adenosine 5'-phosphosulfate + diphosphate. It functions in the pathway sulfur metabolism; hydrogen sulfide biosynthesis; sulfite from sulfate: step 1/3. With CysN forms the ATP sulfurylase (ATPS) that catalyzes the adenylation of sulfate producing adenosine 5'-phosphosulfate (APS) and diphosphate, the first enzymatic step in sulfur assimilation pathway. APS synthesis involves the formation of a high-energy phosphoric-sulfuric acid anhydride bond driven by GTP hydrolysis by CysN coupled to ATP hydrolysis by CysD. The sequence is that of Sulfate adenylyltransferase subunit 2 from Mycobacterium sp. (strain JLS).